The primary structure comprises 54 residues: Hemoglobin subunit omega (54 aa).

A Globin domain is found at His-2–Ile-54.

Belongs to the globin family.

Hemoglobin omega chain is an embryonic-type beta-type chain found in prenatal and neonatal marsupials. In Notamacropus eugenii (Tammar wallaby), this protein is Hemoglobin subunit omega.